Reading from the N-terminus, the 163-residue chain is Succinate dehydrogenase assembly factor 2-A, mitochondrial (163 aa).

Residues 1-23 (MLRQLRLTMDISGWIFLPWRRSM) constitute a mitochondrion transit peptide.

The protein belongs to the SDHAF2 family. As to quaternary structure, interacts with the flavoprotein subunit within the SDH catalytic dimer.

The protein localises to the mitochondrion matrix. Functionally, plays an essential role in the assembly of succinate dehydrogenase (SDH), an enzyme complex (also referred to as respiratory complex II) that is a component of both the tricarboxylic acid (TCA) cycle and the mitochondrial electron transport chain, and which couples the oxidation of succinate to fumarate with the reduction of ubiquinone (coenzyme Q) to ubiquinol. Required for flavinylation (covalent attachment of FAD) of the flavoprotein subunit of the SDH catalytic dimer. The chain is Succinate dehydrogenase assembly factor 2-A, mitochondrial from Drosophila sechellia (Fruit fly).